Reading from the N-terminus, the 74-residue chain is Large ribosomal subunit protein bL31 (74 aa).

It belongs to the bacterial ribosomal protein bL31 family. Type A subfamily. As to quaternary structure, part of the 50S ribosomal subunit.

Binds the 23S rRNA. The polypeptide is Large ribosomal subunit protein bL31 (Phenylobacterium zucineum (strain HLK1)).